Reading from the N-terminus, the 339-residue chain is Phenylalanine--tRNA ligase alpha subunit (339 aa).

E253 contacts Mg(2+).

The protein belongs to the class-II aminoacyl-tRNA synthetase family. Phe-tRNA synthetase alpha subunit type 1 subfamily. Tetramer of two alpha and two beta subunits. The cofactor is Mg(2+).

It localises to the cytoplasm. The enzyme catalyses tRNA(Phe) + L-phenylalanine + ATP = L-phenylalanyl-tRNA(Phe) + AMP + diphosphate + H(+). This is Phenylalanine--tRNA ligase alpha subunit from Alcanivorax borkumensis (strain ATCC 700651 / DSM 11573 / NCIMB 13689 / SK2).